The primary structure comprises 303 residues: N-acetyl-D-glucosamine kinase (303 aa).

ATP-binding positions include 4-11 and 133-140; these read GFDIGGTK and GVGGGLVL. 4 residues coordinate Zn(2+): His157, Cys177, Cys179, and Cys184.

The protein belongs to the ROK (NagC/XylR) family. NagK subfamily.

It catalyses the reaction N-acetyl-D-glucosamine + ATP = N-acetyl-D-glucosamine 6-phosphate + ADP + H(+). It functions in the pathway cell wall biogenesis; peptidoglycan recycling. Its function is as follows. Catalyzes the phosphorylation of N-acetyl-D-glucosamine (GlcNAc) derived from cell-wall degradation, yielding GlcNAc-6-P. The sequence is that of N-acetyl-D-glucosamine kinase from Salmonella paratyphi B (strain ATCC BAA-1250 / SPB7).